A 515-amino-acid chain; its full sequence is Cytochrome P450 monooxygenase ptmJ (515 aa).

The next 4 membrane-spanning stretches (helical) occupy residues Leu-6–Ile-26, Leu-50–Val-70, Val-82–Val-102, and Val-300–His-320. Cys-449 contacts heme.

This sequence belongs to the cytochrome P450 family. Requires heme as cofactor.

It is found in the membrane. The protein operates within secondary metabolite biosynthesis. Functionally, cytochrome P450 monooxygenase; part of the gene cluster that mediates the biosynthesis of the indole diterpenes penitrems. The geranylgeranyl diphosphate (GGPP) synthase ptmG catalyzes the first step in penitrem biosynthesis via conversion of farnesyl pyrophosphate and isopentyl pyrophosphate into geranylgeranyl pyrophosphate (GGPP). Condensation of indole-3-glycerol phosphate with GGPP by the prenyl transferase ptmC then forms 3-geranylgeranylindole (3-GGI). Epoxidation by the FAD-dependent monooxygenase ptmM leads to a epoxidized-GGI that is substrate of the terpene cyclase ptmB for cyclization to yield paspaline. Paspaline is subsequently converted to 13-desoxypaxilline by the cytochrome P450 monooxygenase ptmP, the latter being then converted to paxilline by the cytochrome P450 monooxygenase ptmQ. Paxilline is converted to beta-paxitriol via C-10 ketoreduction by the short-chain dehydrogenase ptmH which can be monoprenylated at the C-20 by the indole diterpene prenyltransferase ptmD. A two-step elimination (acetylation and elimination) process performed by the O-acetyltransferase ptmV and ptmI leads to the production of the prenylated form of penijanthine. The FAD-linked oxidoreductase ptmO then converts the prenylated form of penijanthine into PC-M5 which is in turn transformed into PC-M4 by the aromatic dimethylallyltransferase ptmE. Five sequential oxidative transformations performed by the cytochrome P450 monooxygenases ptmK, ptmU, ptmL, ptmN and ptmJ yield the various penitrem compounds. PtmK, ptmU and ptmM are involved in the formation of the key bicyclic ring of penitrem C via the formation of the intermediates secopenitrem D and penitrem D. PtmL catalyzes the epoxidation of penitrem D and C to yield penitrem B and F, respectively. PtmJ catalyzes the last benzylic hydroxylation to convert penitrem B to prenitrem E and penitrem F to penitrem A. The chain is Cytochrome P450 monooxygenase ptmJ from Penicillium ochrochloron.